The chain runs to 343 residues: Transcription factor MYB83 (343 aa).

Positions 1 to 16 are enriched in basic and acidic residues; sequence MMMRKPDITTIRDKGK. The disordered stretch occupies residues 1 to 33; sequence MMMRKPDITTIRDKGKPNHACGGNNNKPKLRKG. HTH myb-type domains lie at 27 to 79 and 80 to 134; these read KPKL…INYL and RPDL…KKRL. 2 consecutive DNA-binding regions (H-T-H motif) follow at residues 55–79 and 107–130; these read WSDI…INYL and WSQI…NSTL. The interval 134 to 172 is disordered; the sequence is LKNNSNNNTSSGSSPNNSNSNSLDPRDQHVDMGGNSTSL. Over residues 136-155 the composition is skewed to low complexity; the sequence is NNSNNNTSSGSSPNNSNSNS.

As to expression, expressed specifically in fiber and vessel cells that are undergoing secondary wall thickening in floral stems. Expressed in vessels but not in xylary fibers in the developing secondary xylem of roots.

The protein resides in the nucleus. Functionally, transcription factor that acts as a molecular switch in the NAC012/SND1-mediated transcriptional network regulating secondary wall biosynthesis. Is directly activated by NAC012/SND1 and its close homologs, including NAC043/NST1, NAC066/NST2, NAC101/VND6 and NAC030/VND7. Is required for functional expression of a number of secondary wall-associated transcription factors and secondary wall biosynthetic genes involved in cellulose, xylan and lignin synthesis. Functions redundantly with MYB46 in the transcriptional regulatory cascade leading to secondary wall formation in fibers and vessels. Transcription activator that binds to the DNA consensus sequence 5'-ACC[AT]A[AC][TC]-3', designated as the secondary wall MYB-responsive element (SMRE). Regulates directly numerous transcription factors and a number of genes involved in secondary wall biosynthesis that contain SMRE elements in their promoters. The chain is Transcription factor MYB83 from Arabidopsis thaliana (Mouse-ear cress).